A 306-amino-acid polypeptide reads, in one-letter code: Pantothenate kinase (306 aa).

90–97 provides a ligand contact to ATP; it reads GSVAVGKS.

Belongs to the prokaryotic pantothenate kinase family.

It is found in the cytoplasm. The enzyme catalyses (R)-pantothenate + ATP = (R)-4'-phosphopantothenate + ADP + H(+). It participates in cofactor biosynthesis; coenzyme A biosynthesis; CoA from (R)-pantothenate: step 1/5. In Lactococcus lactis subsp. cremoris (strain MG1363), this protein is Pantothenate kinase.